We begin with the raw amino-acid sequence, 508 residues long: Photosystem II CP47 reaction center protein (508 aa).

Transmembrane regions (helical) follow at residues 21 to 36 (SVHI…WAGS), 101 to 115 (IVFS…IWHW), 140 to 156 (GIHL…FGAF), 203 to 218 (IAAG…FHLS), 237 to 252 (VLSS…AFVV), and 457 to 472 (TFAL…HGAR).

Belongs to the PsbB/PsbC family. PsbB subfamily. PSII is composed of 1 copy each of membrane proteins PsbA, PsbB, PsbC, PsbD, PsbE, PsbF, PsbH, PsbI, PsbJ, PsbK, PsbL, PsbM, PsbT, PsbX, PsbY, PsbZ, Psb30/Ycf12, at least 3 peripheral proteins of the oxygen-evolving complex and a large number of cofactors. It forms dimeric complexes. It depends on Binds multiple chlorophylls. PSII binds additional chlorophylls, carotenoids and specific lipids. as a cofactor.

Its subcellular location is the plastid. It is found in the chloroplast thylakoid membrane. In terms of biological role, one of the components of the core complex of photosystem II (PSII). It binds chlorophyll and helps catalyze the primary light-induced photochemical processes of PSII. PSII is a light-driven water:plastoquinone oxidoreductase, using light energy to abstract electrons from H(2)O, generating O(2) and a proton gradient subsequently used for ATP formation. The sequence is that of Photosystem II CP47 reaction center protein from Oryza sativa subsp. indica (Rice).